The following is an 84-amino-acid chain: Cytochrome b559 subunit alpha (84 aa).

Residues 24–38 (IIHAVTLPAIFIAGF) traverse the membrane as a helical segment. H26 contributes to the heme binding site.

Belongs to the PsbE/PsbF family. In terms of assembly, heterodimer of an alpha subunit and a beta subunit. PSII is composed of 1 copy each of membrane proteins PsbA, PsbB, PsbC, PsbD, PsbE, PsbF, PsbH, PsbI, PsbJ, PsbK, PsbL, PsbM, PsbT, PsbX, PsbY, Psb30/Ycf12, peripheral proteins PsbO, CyanoQ (PsbQ), PsbU, PsbV and a large number of cofactors. It forms dimeric complexes. Heme b is required as a cofactor.

It localises to the cellular thylakoid membrane. This b-type cytochrome is tightly associated with the reaction center of photosystem II (PSII). PSII is a light-driven water:plastoquinone oxidoreductase that uses light energy to abstract electrons from H(2)O, generating O(2) and a proton gradient subsequently used for ATP formation. It consists of a core antenna complex that captures photons, and an electron transfer chain that converts photonic excitation into a charge separation. The sequence is that of Cytochrome b559 subunit alpha from Prochlorococcus marinus subsp. pastoris (strain CCMP1986 / NIES-2087 / MED4).